Reading from the N-terminus, the 487-residue chain is Cytochrome P450 2C21 (487 aa).

Cys-432 serves as a coordination point for heme.

It belongs to the cytochrome P450 family. It depends on heme as a cofactor. In terms of tissue distribution, liver.

The protein resides in the endoplasmic reticulum membrane. It localises to the microsome membrane. The catalysed reaction is an organic molecule + reduced [NADPH--hemoprotein reductase] + O2 = an alcohol + oxidized [NADPH--hemoprotein reductase] + H2O + H(+). Cytochromes P450 are a group of heme-thiolate monooxygenases. In liver microsomes, this enzyme is involved in an NADPH-dependent electron transport pathway. It oxidizes a variety of structurally unrelated compounds, including steroids, fatty acids, and xenobiotics. Showed testosterone hydrolase activity. The sequence is that of Cytochrome P450 2C21 (CYP2C21) from Canis lupus familiaris (Dog).